We begin with the raw amino-acid sequence, 112 residues long: MYB-like transcription factor ETC2 (112 aa).

The Myb-like domain occupies 41–78; the sequence is TEQEEDLISRMYRLVGNRWDLIAGRVVGRKANEIERYW.

In terms of assembly, interacts with GL3. Expressed in stomatal guard mother cells, young stomata and trichomes of young leaves, and inflorescences.

The protein localises to the nucleus. Functionally, MYB-type transcription factor involved in epidermal cell fate specification. Acts as a negative regulator of trichome development, by mediating lateral inhibition. Promotes the formation of hair developing cells in H position in root epidermis, probably by inhibiting non-hair cell formation. The sequence is that of MYB-like transcription factor ETC2 (ETC2) from Arabidopsis thaliana (Mouse-ear cress).